A 41-amino-acid chain; its full sequence is Large ribosomal subunit protein bL36A (41 aa).

It belongs to the bacterial ribosomal protein bL36 family.

The protein is Large ribosomal subunit protein bL36A of Aeromonas salmonicida (strain A449).